The sequence spans 1537 residues: Dicer-like protein 1 (1537 aa).

The tract at residues Ser38–Asp68 is disordered. The Helicase ATP-binding domain occupies Leu133 to Leu314. Leu146–Thr153 provides a ligand contact to ATP. The DEAH box motif lies at Asp259–His262. The 160-residue stretch at Glu459 to His618 folds into the Helicase C-terminal domain. Positions Ala651–Ala741 constitute a Dicer dsRNA-binding fold domain. Positions Asp891–Ala1019 constitute a PAZ domain. RNase III domains follow at residues Ile1043 to Gly1202 and Ala1253 to Lys1405. Mg(2+) contacts are provided by Glu1294, Asp1391, and Glu1394. Positions Thr1439–Gly1507 constitute a DRBM domain. Zn(2+) contacts are provided by Cys1451, His1478, Cys1519, and Cys1521.

This sequence belongs to the helicase family. Dicer subfamily. Mg(2+) serves as cofactor. The cofactor is Mn(2+).

In terms of biological role, dicer-like endonuclease involved in cleaving double-stranded RNA in the RNA interference (RNAi) pathway. Produces 21 to 25 bp dsRNAs (siRNAs) which target the selective destruction of homologous RNAs leading to sequence-specific suppression of gene expression, called post-transcriptional gene silencing (PTGS). Part of a broad host defense response against viral infection and transposons. In Aspergillus fumigatus (strain ATCC MYA-4609 / CBS 101355 / FGSC A1100 / Af293) (Neosartorya fumigata), this protein is Dicer-like protein 1 (dcl1).